The primary structure comprises 283 residues: Thymidylate synthase (283 aa).

DUMP is bound at residue Arg-22. Catalysis depends on Cys-160, which acts as the Nucleophile. DUMP is bound by residues 180-183, Asn-191, and 221-223; these read RSCD and HIY. Asp-183 lines the (6R)-5,10-methylene-5,6,7,8-tetrahydrofolate pocket. Position 282 (Ser-282) interacts with (6R)-5,10-methylene-5,6,7,8-tetrahydrofolate.

This sequence belongs to the thymidylate synthase family. Bacterial-type ThyA subfamily. In terms of assembly, homodimer.

Its subcellular location is the cytoplasm. It carries out the reaction dUMP + (6R)-5,10-methylene-5,6,7,8-tetrahydrofolate = 7,8-dihydrofolate + dTMP. It participates in pyrimidine metabolism; dTTP biosynthesis. Functionally, catalyzes the reductive methylation of 2'-deoxyuridine-5'-monophosphate (dUMP) to 2'-deoxythymidine-5'-monophosphate (dTMP) while utilizing 5,10-methylenetetrahydrofolate (mTHF) as the methyl donor and reductant in the reaction, yielding dihydrofolate (DHF) as a by-product. This enzymatic reaction provides an intracellular de novo source of dTMP, an essential precursor for DNA biosynthesis. In Pasteurella multocida (strain Pm70), this protein is Thymidylate synthase.